Consider the following 33-residue polypeptide: Cecropin-C (33 aa).

K21 bears the 5-hydroxylysine mark.

As to quaternary structure, monomer. As to expression, hemolymph.

It localises to the secreted. Its function is as follows. Cecropins have lytic and antibacterial activity against several Gram-positive and Gram-negative bacteria. Also has activity against fungi. This chain is Cecropin-C, found in Heliothis virescens (Tobacco budworm moth).